Here is a 224-residue protein sequence, read N- to C-terminus: Ornithine decarboxylase antizyme (224 aa).

The protein belongs to the ODC antizyme family. Interacts with ODC and thereby sterically blocks ODC homodimerization.

Functionally, ornithine decarboxylase (ODC) antizyme protein that negatively regulates ODC activity and intracellular polyamine biosynthesis in response to increased intracellular polyamine levels. Binds to ODC monomers, inhibiting the assembly of the functional ODC homodimer, and targets the monomers for ubiquitin-independent proteolytic destruction by the 26S proteasome. The polypeptide is Ornithine decarboxylase antizyme (spa1) (Schizosaccharomyces octosporus (Fission yeast)).